We begin with the raw amino-acid sequence, 112 residues long: uncharacterized protein (112 aa).

A helical transmembrane segment spans residues 85-105; sequence IVQLIILFAIIITNPNAIELI.

This sequence belongs to the M.jannaschii MJ0023/MJ0349/MJ1072/MJ1074/MJ1107/MJECL16 family.

Its subcellular location is the membrane. This is an uncharacterized protein from Methanocaldococcus jannaschii (strain ATCC 43067 / DSM 2661 / JAL-1 / JCM 10045 / NBRC 100440) (Methanococcus jannaschii).